The following is a 188-amino-acid chain: Elongation factor P (188 aa).

Belongs to the elongation factor P family.

Its subcellular location is the cytoplasm. It participates in protein biosynthesis; polypeptide chain elongation. Its function is as follows. Involved in peptide bond synthesis. Stimulates efficient translation and peptide-bond synthesis on native or reconstituted 70S ribosomes in vitro. Probably functions indirectly by altering the affinity of the ribosome for aminoacyl-tRNA, thus increasing their reactivity as acceptors for peptidyl transferase. This is Elongation factor P from Rickettsia massiliae (strain Mtu5).